Consider the following 83-residue polypeptide: MNYLVMISLALLIAGVDSARDAYIAKNDNCVYECFQDSYCNDLCTKNGAKSGTCDWIGTYGDACLCYALPDNVPIKLSGECHR.

The signal sequence occupies residues 1-18 (MNYLVMISLALLIAGVDS). An LCN-type CS-alpha/beta domain is found at 20–82 (RDAYIAKNDN…VPIKLSGECH (63 aa)). 4 disulfide bridges follow: C30-C81, C34-C54, C40-C64, and C44-C66.

Belongs to the long (4 C-C) scorpion toxin superfamily. Sodium channel inhibitor family. Alpha subfamily. As to expression, expressed by the venom gland.

The protein localises to the secreted. Functionally, binds voltage-independently at site-3 of sodium channels (Nav) and inhibits the inactivation of the activated channels, thereby blocking neuronal transmission. The protein is Toxin AahP985 of Androctonus australis (Sahara scorpion).